Reading from the N-terminus, the 205-residue chain is dTTP/UTP pyrophosphatase (205 aa).

Residue Asp-71 is the Proton acceptor of the active site.

It belongs to the Maf family. YhdE subfamily. The cofactor is a divalent metal cation.

The protein localises to the cytoplasm. It catalyses the reaction dTTP + H2O = dTMP + diphosphate + H(+). The enzyme catalyses UTP + H2O = UMP + diphosphate + H(+). Nucleoside triphosphate pyrophosphatase that hydrolyzes dTTP and UTP. May have a dual role in cell division arrest and in preventing the incorporation of modified nucleotides into cellular nucleic acids. The protein is dTTP/UTP pyrophosphatase of Syntrophus aciditrophicus (strain SB).